Here is a 191-residue protein sequence, read N- to C-terminus: Large ribosomal subunit protein uL6A (191 aa).

Belongs to the universal ribosomal protein uL6 family. Component of the large ribosomal subunit (LSU). Mature yeast ribosomes consist of a small (40S) and a large (60S) subunit. The 40S small subunit contains 1 molecule of ribosomal RNA (18S rRNA) and 33 different proteins (encoded by 57 genes). The large 60S subunit contains 3 rRNA molecules (25S, 5.8S and 5S rRNA) and 46 different proteins (encoded by 81 genes). uL6 lines the binding pocket for eukaryotic elongation factor 2 (eEF2).

It localises to the cytoplasm. Functionally, component of the ribosome, a large ribonucleoprotein complex responsible for the synthesis of proteins in the cell. The small ribosomal subunit (SSU) binds messenger RNAs (mRNAs) and translates the encoded message by selecting cognate aminoacyl-transfer RNA (tRNA) molecules. The large subunit (LSU) contains the ribosomal catalytic site termed the peptidyl transferase center (PTC), which catalyzes the formation of peptide bonds, thereby polymerizing the amino acids delivered by tRNAs into a polypeptide chain. The nascent polypeptides leave the ribosome through a tunnel in the LSU and interact with protein factors that function in enzymatic processing, targeting, and the membrane insertion of nascent chains at the exit of the ribosomal tunnel. The polypeptide is Large ribosomal subunit protein uL6A (Saccharomyces cerevisiae (strain ATCC 204508 / S288c) (Baker's yeast)).